We begin with the raw amino-acid sequence, 63 residues long: Sperm protamine P1 (63 aa).

The tract at residues 1 to 63 is disordered; sequence MARYRRHSRS…RYSRRGRRRY (63 aa).

Belongs to the protamine P1 family. In terms of tissue distribution, testis.

Its subcellular location is the nucleus. The protein resides in the chromosome. In terms of biological role, protamines substitute for histones in the chromatin of sperm during the haploid phase of spermatogenesis. They compact sperm DNA into a highly condensed, stable and inactive complex. This chain is Sperm protamine P1 (PRM1), found in Phascogale tapoatafa (Common wambenger).